The chain runs to 122 residues: ATP-dependent Clp protease adapter protein ClpS (122 aa).

Residues M1–S27 are disordered. Over residues S10–A19 the composition is skewed to pro residues.

This sequence belongs to the ClpS family. In terms of assembly, binds to the N-terminal domain of the chaperone ClpA.

In terms of biological role, involved in the modulation of the specificity of the ClpAP-mediated ATP-dependent protein degradation. The sequence is that of ATP-dependent Clp protease adapter protein ClpS from Paracidovorax citrulli (strain AAC00-1) (Acidovorax citrulli).